Consider the following 242-residue polypeptide: RxLR effector protein PexRD15 (242 aa).

Residues 1-24 form the signal peptide; the sequence is MMKSLYAVNLVLLLLLAFFAPAPA. Residues 48–66 carry the RxLR-dEER motif; it reads RLLRAHSSDKEEQKEEEER.

The protein belongs to the RxLR effector family.

It is found in the secreted. It localises to the host cell membrane. Functionally, effector that enhances P.infestans colonization of Nicotiana benthamiana leaves. The protein is RxLR effector protein PexRD15 of Phytophthora infestans (strain T30-4) (Potato late blight agent).